The primary structure comprises 400 residues: 3-phenylpropionate/cinnamic acid dioxygenase ferredoxin--NAD(+) reductase component (400 aa).

5-36 (TIIIVGGGQAAAMAAASLRQQGFTGELHLFSD) is a binding site for FAD. 146-174 (SVVIVGAGTIGLELAASATQRGCKVTVIE) lines the NAD(+) pocket.

Belongs to the bacterial ring-hydroxylating dioxygenase ferredoxin reductase family. In terms of assembly, this dioxygenase system consists of four proteins: the two subunits of the hydroxylase component (HcaE and HcaF), a ferredoxin (HcaC) and a ferredoxin reductase (HcaD). The cofactor is FAD.

It carries out the reaction 2 reduced [2Fe-2S]-[ferredoxin] + NAD(+) + H(+) = 2 oxidized [2Fe-2S]-[ferredoxin] + NADH. The protein operates within aromatic compound metabolism; 3-phenylpropanoate degradation. Its function is as follows. Part of the multicomponent 3-phenylpropionate dioxygenase, that converts 3-phenylpropionic acid (PP) and cinnamic acid (CI) into 3-phenylpropionate-dihydrodiol (PP-dihydrodiol) and cinnamic acid-dihydrodiol (CI-dihydrodiol), respectively. The sequence is that of 3-phenylpropionate/cinnamic acid dioxygenase ferredoxin--NAD(+) reductase component from Escherichia coli (strain SMS-3-5 / SECEC).